The sequence spans 1166 residues: Tectonin beta-propeller repeat-containing protein 1 (1166 aa).

TECPR repeat units lie at residues 209–240 (LSVW…SLVD), 254–285 (DLIW…SIVE), 301–332 (SVVW…IEMV), and 344–376 (DQVW…KAIV). Phosphoserine is present on residues Ser386, Ser388, Ser391, Ser413, and Ser418. The disordered stretch occupies residues 403-492 (VRGSGTESAP…PAPTPAELPW (90 aa)). Over residues 407 to 418 (GTESAPSDTDAS) the composition is skewed to polar residues. Positions 420–436 (EVERQGPERSLPKESLD) are enriched in basic and acidic residues. Positions 437 to 446 (NSRNLKGSSS) are enriched in polar residues. Residues 447 to 456 (KGHESTRNTE) show a composition bias toward basic and acidic residues. Residues 616–722 (KTGALQWWCD…WLTLLSLSCC (107 aa)) enclose the PH domain. A TECPR 5 repeat occupies 734-761 (QAIWSVTCKGDIFVSEPSPDLEAHEHLL). Residue Ser943 is modified to Phosphoserine. TECPR repeat units lie at residues 958–989 (IALW…LHVG), 1003–1034 (YQVW…YHIP), 1049–1080 (TSVY…EHVS), and 1092–1132 (DQVW…DYGI). The tract at residues 1147 to 1166 (RAPRNMSRDQEAHGPGPVCC) is disordered.

This sequence belongs to the TECPR1 family. Interacts with ATG5; the interaction is direct. Interacts with WIPI2. Interacts with the ATG5-ATG12 conjugate, the interaction is however mutually exclusive with ATG16, since it does not interact with ATG12-ATG5-ATG16 complex.

Its subcellular location is the cytoplasmic vesicle. It localises to the autophagosome membrane. The protein localises to the lysosome membrane. Its function is as follows. Tethering factor involved in autophagy. Involved in autophagosome maturation by promoting the autophagosome fusion with lysosomes: acts by associating with both the ATG5-ATG12 conjugate and phosphatidylinositol-3-phosphate (PtdIns(3)P) present at the surface of autophagosomes. Also involved in selective autophagy against bacterial pathogens, by being required for phagophore/preautophagosomal structure biogenesis and maturation. This Rattus norvegicus (Rat) protein is Tectonin beta-propeller repeat-containing protein 1 (Tecpr1).